The sequence spans 224 residues: Glycerol-3-phosphate acyltransferase (224 aa).

6 helical membrane-spanning segments follow: residues 4-24 (FVIV…GSIN), 60-80 (LVIF…VYFV), 88-108 (SVVV…FPIW), 124-144 (IISV…LIII), 149-169 (IVSF…FIPW), and 182-202 (WPWW…IWSH).

This sequence belongs to the PlsY family. Probably interacts with PlsX.

The protein localises to the cell membrane. The catalysed reaction is an acyl phosphate + sn-glycerol 3-phosphate = a 1-acyl-sn-glycero-3-phosphate + phosphate. It participates in lipid metabolism; phospholipid metabolism. Its function is as follows. Catalyzes the transfer of an acyl group from acyl-phosphate (acyl-PO(4)) to glycerol-3-phosphate (G3P) to form lysophosphatidic acid (LPA). This enzyme utilizes acyl-phosphate as fatty acyl donor, but not acyl-CoA or acyl-ACP. The protein is Glycerol-3-phosphate acyltransferase of Mycoplasmopsis pulmonis (strain UAB CTIP) (Mycoplasma pulmonis).